The following is a 299-amino-acid chain: HTH-type transcriptional repressor CarH (299 aa).

In terms of domain architecture, HTH merR-type spans 5-74; the sequence is TYRINIAAEL…ISEAAKLLPQ (70 aa). Positions 8 to 27 form a DNA-binding region, H-T-H motif; that stretch reads INIAAELAGVRVELIRAWER. The B12-binding domain maps to 180 to 299; the sequence is HRHGVLACFP…EEDWDRLAGT (120 aa).

This sequence belongs to the CarA/CarH B12-binding photoregulator family. Forms oligomers. Interacts with CarS.

With respect to regulation, requires cobalamin (vitamin B12) for repressor activity. In the dark, binding of cobalamin to CarH induces its oligomerization, which enhances binding to the DNA and repressor activity. Light causes cobalamin photolysis and disruption of the cobalamin-CarH complex, which decreases interaction with DNA and allows transcription of the carB operon. Interaction with CarS also prevents binding to DNA. Its function is as follows. Negative regulator of the carB operon in the dark. Binds specifically to the CarA operator, in the region around the carB promoter, which blocks access to the RNA polymerase. This is HTH-type transcriptional repressor CarH (carH) from Myxococcus xanthus.